Consider the following 72-residue polypeptide: Prokaryotic ubiquitin-like protein Pup (72 aa).

Positions 1–11 (MAQRDTGGGQQ) are enriched in gly residues. Residues 1 to 41 (MAQRDTGGGQQRTGRRDDETAEAEVEESGASDLKERHEKLS) are disordered. The segment covering 19–29 (ETAEAEVEESG) has biased composition (acidic residues). Positions 22–61 (EAEVEESGASDLKERHEKLSEDVDSLLDEIDDVLEENAEE) form a coiled coil. Residues 28–66 (SGASDLKERHEKLSEDVDSLLDEIDDVLEENAEEFVKGY) form an ARC ATPase binding region. Over residues 32–41 (DLKERHEKLS) the composition is skewed to basic and acidic residues. At Q72 the chain carries Deamidated glutamine. An Isoglutamyl lysine isopeptide (Gln-Lys) (interchain with K-? in acceptor proteins) cross-link involves residue Q72.

It belongs to the prokaryotic ubiquitin-like protein family. In terms of assembly, strongly interacts with the proteasome-associated ATPase ARC through a hydrophobic interface; the interacting region of Pup lies in its C-terminal half. There is one Pup binding site per ARC hexamer ring. In terms of processing, is modified by deamidation of its C-terminal glutamine to glutamate by the deamidase Dop, a prerequisite to the subsequent pupylation process.

The protein operates within protein degradation; proteasomal Pup-dependent pathway. Protein modifier that is covalently attached to lysine residues of substrate proteins, thereby targeting them for proteasomal degradation. The tagging system is termed pupylation. This Parafrankia sp. (strain EAN1pec) protein is Prokaryotic ubiquitin-like protein Pup.